Here is a 528-residue protein sequence, read N- to C-terminus: Probable serine/threonine-protein kinase 380R (528 aa).

A disordered region spans residues 70-96 (VKIPKSKSPPKVKSPKRKKSPVRRRVS). Over residues 73-95 (PKSKSPPKVKSPKRKKSPVRRRV) the composition is skewed to basic residues. In terms of domain architecture, Protein kinase spans 156-507 (FTNVKAVGKG…LANVLIHKIF (352 aa)). ATP-binding positions include 162–170 (VGKGSFGTV) and K187. D302 acts as the Proton acceptor in catalysis.

Belongs to the protein kinase superfamily. Ser/Thr protein kinase family.

The catalysed reaction is L-seryl-[protein] + ATP = O-phospho-L-seryl-[protein] + ADP + H(+). It catalyses the reaction L-threonyl-[protein] + ATP = O-phospho-L-threonyl-[protein] + ADP + H(+). The polypeptide is Probable serine/threonine-protein kinase 380R (Invertebrate iridescent virus 6 (IIV-6)).